The sequence spans 662 residues: UvrABC system protein B (662 aa).

Residues 25-414 form the Helicase ATP-binding domain; it reads AGLNSKKRSQ…GTVVELIIRP (390 aa). Residue 38 to 45 participates in ATP binding; the sequence is GITGSGKT. Positions 91–114 match the Beta-hairpin motif; that stretch reads YYDYYQPEAYIVRTDTFIEKDSSI. Positions 430-592 constitute a Helicase C-terminal domain; sequence QVEDLISEIQ…IIPKTINSAI (163 aa). Positions 622 to 657 constitute a UVR domain; it reads KSYMDKLKKEMFKAASNLEFEQAAKLRNQLKTLEKA.

This sequence belongs to the UvrB family. Forms a heterotetramer with UvrA during the search for lesions. Interacts with UvrC in an incision complex.

It localises to the cytoplasm. In terms of biological role, the UvrABC repair system catalyzes the recognition and processing of DNA lesions. A damage recognition complex composed of 2 UvrA and 2 UvrB subunits scans DNA for abnormalities. Upon binding of the UvrA(2)B(2) complex to a putative damaged site, the DNA wraps around one UvrB monomer. DNA wrap is dependent on ATP binding by UvrB and probably causes local melting of the DNA helix, facilitating insertion of UvrB beta-hairpin between the DNA strands. Then UvrB probes one DNA strand for the presence of a lesion. If a lesion is found the UvrA subunits dissociate and the UvrB-DNA preincision complex is formed. This complex is subsequently bound by UvrC and the second UvrB is released. If no lesion is found, the DNA wraps around the other UvrB subunit that will check the other stand for damage. The sequence is that of UvrABC system protein B from Rickettsia typhi (strain ATCC VR-144 / Wilmington).